The following is a 132-amino-acid chain: uncharacterized protein (132 aa).

This is an uncharacterized protein from Saccharomyces cerevisiae (strain ATCC 204508 / S288c) (Baker's yeast).